The primary structure comprises 282 residues: Elongation factor Ts (282 aa).

Residues 79–82 (TDFV) are involved in Mg(2+) ion dislocation from EF-Tu.

Belongs to the EF-Ts family.

It localises to the cytoplasm. Its function is as follows. Associates with the EF-Tu.GDP complex and induces the exchange of GDP to GTP. It remains bound to the aminoacyl-tRNA.EF-Tu.GTP complex up to the GTP hydrolysis stage on the ribosome. The sequence is that of Elongation factor Ts from Shewanella woodyi (strain ATCC 51908 / MS32).